Here is a 303-residue protein sequence, read N- to C-terminus: Albumin b-32 (303 aa).

Over residues 112–137 the composition is skewed to low complexity; the sequence is ATPTSSATTPGGSASAAGTRTSSATR. Positions 112 to 175 are disordered; that stretch reads ATPTSSATTP…GGGGADADAD (64 aa). Basic and acidic residues predominate over residues 146–156; the sequence is ARDDQGRQRPG.

This sequence belongs to the ribosome-inactivating protein family. Type 1 RIP subfamily. In terms of assembly, monomer. Endosperm.

It localises to the cytoplasm. It catalyses the reaction Endohydrolysis of the N-glycosidic bond at one specific adenosine on the 28S rRNA.. Functionally, a possible regulatory factor for the synthesis of zeins, the major group of storage proteins. The polypeptide is Albumin b-32 (O6) (Zea mays (Maize)).